Reading from the N-terminus, the 340-residue chain is 4-hydroxy-3-methylbut-2-enyl diphosphate reductase (340 aa).

Position 21 (cysteine 21) interacts with [4Fe-4S] cluster. Residues histidine 50 and histidine 83 each contribute to the (2E)-4-hydroxy-3-methylbut-2-enyl diphosphate site. Residues histidine 50 and histidine 83 each coordinate dimethylallyl diphosphate. Isopentenyl diphosphate-binding residues include histidine 50 and histidine 83. Cysteine 105 is a binding site for [4Fe-4S] cluster. Residue histidine 133 participates in (2E)-4-hydroxy-3-methylbut-2-enyl diphosphate binding. Residue histidine 133 coordinates dimethylallyl diphosphate. Histidine 133 contributes to the isopentenyl diphosphate binding site. Glutamate 135 (proton donor) is an active-site residue. Threonine 173 lines the (2E)-4-hydroxy-3-methylbut-2-enyl diphosphate pocket. Cysteine 203 serves as a coordination point for [4Fe-4S] cluster. Residues serine 231, serine 232, asparagine 233, and serine 276 each coordinate (2E)-4-hydroxy-3-methylbut-2-enyl diphosphate. 4 residues coordinate dimethylallyl diphosphate: serine 231, serine 232, asparagine 233, and serine 276. The isopentenyl diphosphate site is built by serine 231, serine 232, asparagine 233, and serine 276. The segment at lysine 320–arginine 340 is disordered.

Belongs to the IspH family. The cofactor is [4Fe-4S] cluster.

It carries out the reaction isopentenyl diphosphate + 2 oxidized [2Fe-2S]-[ferredoxin] + H2O = (2E)-4-hydroxy-3-methylbut-2-enyl diphosphate + 2 reduced [2Fe-2S]-[ferredoxin] + 2 H(+). The catalysed reaction is dimethylallyl diphosphate + 2 oxidized [2Fe-2S]-[ferredoxin] + H2O = (2E)-4-hydroxy-3-methylbut-2-enyl diphosphate + 2 reduced [2Fe-2S]-[ferredoxin] + 2 H(+). It participates in isoprenoid biosynthesis; dimethylallyl diphosphate biosynthesis; dimethylallyl diphosphate from (2E)-4-hydroxy-3-methylbutenyl diphosphate: step 1/1. It functions in the pathway isoprenoid biosynthesis; isopentenyl diphosphate biosynthesis via DXP pathway; isopentenyl diphosphate from 1-deoxy-D-xylulose 5-phosphate: step 6/6. Its function is as follows. Catalyzes the conversion of 1-hydroxy-2-methyl-2-(E)-butenyl 4-diphosphate (HMBPP) into a mixture of isopentenyl diphosphate (IPP) and dimethylallyl diphosphate (DMAPP). Acts in the terminal step of the DOXP/MEP pathway for isoprenoid precursor biosynthesis. This chain is 4-hydroxy-3-methylbut-2-enyl diphosphate reductase, found in Acidothermus cellulolyticus (strain ATCC 43068 / DSM 8971 / 11B).